Consider the following 249-residue polypeptide: 2-C-methyl-D-erythritol 4-phosphate cytidylyltransferase (249 aa).

The protein belongs to the IspD/TarI cytidylyltransferase family. IspD subfamily.

It carries out the reaction 2-C-methyl-D-erythritol 4-phosphate + CTP + H(+) = 4-CDP-2-C-methyl-D-erythritol + diphosphate. It participates in isoprenoid biosynthesis; isopentenyl diphosphate biosynthesis via DXP pathway; isopentenyl diphosphate from 1-deoxy-D-xylulose 5-phosphate: step 2/6. In terms of biological role, catalyzes the formation of 4-diphosphocytidyl-2-C-methyl-D-erythritol from CTP and 2-C-methyl-D-erythritol 4-phosphate (MEP). This is 2-C-methyl-D-erythritol 4-phosphate cytidylyltransferase from Shewanella oneidensis (strain ATCC 700550 / JCM 31522 / CIP 106686 / LMG 19005 / NCIMB 14063 / MR-1).